Here is a 76-residue protein sequence, read N- to C-terminus: Exodeoxyribonuclease 7 small subunit (76 aa).

It belongs to the XseB family. In terms of assembly, heterooligomer composed of large and small subunits.

Its subcellular location is the cytoplasm. The enzyme catalyses Exonucleolytic cleavage in either 5'- to 3'- or 3'- to 5'-direction to yield nucleoside 5'-phosphates.. Functionally, bidirectionally degrades single-stranded DNA into large acid-insoluble oligonucleotides, which are then degraded further into small acid-soluble oligonucleotides. This Geobacter sulfurreducens (strain ATCC 51573 / DSM 12127 / PCA) protein is Exodeoxyribonuclease 7 small subunit.